The primary structure comprises 156 residues: MQTTKNQDDLVRIFKSILKEERFGSQSEIVTALQAEGFGNINQSKVSRMLSKFGAVRTRNAKQEMVYCLPAELGVPTAGSPLKNLVLDVDHNQAMIVVRTSPGAAQLIARLLDSIGKPEGILGTIAGDDTIFICPSSIQDIADTLETIKSLFNYAE.

Belongs to the ArgR family.

It localises to the cytoplasm. It functions in the pathway amino-acid biosynthesis; L-arginine biosynthesis [regulation]. Functionally, regulates arginine biosynthesis genes. The sequence is that of Arginine repressor from Shewanella baltica (strain OS223).